The chain runs to 228 residues: Small ribosomal subunit protein uS3 (228 aa).

The KH type-2 domain occupies 39–107; the sequence is VREYLQDKLK…PVHINIEEIR (69 aa).

This sequence belongs to the universal ribosomal protein uS3 family. In terms of assembly, part of the 30S ribosomal subunit. Forms a tight complex with proteins S10 and S14.

Functionally, binds the lower part of the 30S subunit head. Binds mRNA in the 70S ribosome, positioning it for translation. This Stutzerimonas stutzeri (strain A1501) (Pseudomonas stutzeri) protein is Small ribosomal subunit protein uS3.